A 915-amino-acid chain; its full sequence is p53-induced death domain-containing protein 1 (915 aa).

Alanine 2 carries the post-translational modification N-acetylalanine. LRR repeat units lie at residues 131–152 (CLAH…VPEL), 154–176 (GLDA…GALP), 177–199 (ALTF…GSLS), 200–221 (TLQR…IGNL), 223–245 (SLSE…AGLR), 246–268 (SLRL…VHLP), and 269–290 (LITR…LLDA). The residue at position 304 (serine 304) is a Phosphoserine. 2 consecutive ZU5 domains span residues 327 to 459 (DLDS…VLRP) and 460 to 601 (VSNT…WYTT). 2 peptidase S68 regions span residues 428-457 (DLET…LVVL) and 571-599 (DITT…WLWY). Residues histidine 449, serine 451, histidine 591, and serine 593 contribute to the active site. Positions 585–721 (ARFQVTHFSW…TTALDREAQD (137 aa)) are UPA domain. The Death domain occupies 793 to 878 (TQSNLLSVAS…DVAEEVRAIL (86 aa)). The tract at residues 888 to 915 (SIRRTGLAPEDSTLPGTSASQTPESAQA) is disordered. Over residues 901–915 (LPGTSASQTPESAQA) the composition is skewed to polar residues.

Forms a complex named the PIDDosome with CASP2 and CRADD. Forms a complex with IKBKG and RIPK1. Interacts with FADD and MADD. In terms of processing, undergoes autoproteolytic processing whose extent either directs cells towards survival or apoptotic pathways. Autoproteolytically cleaved into two main fragments PIDD-N and PIDD-C. PIDD-C can be further processed into PIDD-CC, a processing which is enhanced by DNA damage. The cleavage producing PIDD-C is required for translocation of PIDD1 to the nucleus upon DNA damage and activation of NF-kappa-B. PIDD-CC mediates the interaction with CRADD and the cleavage producing PIDD-CC is required for the activation of CASP2. PIDD-N remains associated with PIDD-C and PIDD-CC after cleavage. Ubiquitous.

Its subcellular location is the cytoplasm. The protein localises to the nucleus. In terms of biological role, component of the DNA damage/stress response pathway that functions downstream of p53/TP53 and can either promote cell survival or apoptosis. Associated with CRADD and the CASP2 caspase, it forms the PIDDosome a complex that activates CASP2 and triggers apoptosis. Associated with IKBKG and RIPK1, it enhances sumoylation and ubiquitination of IKBKG which is important for activation of the transcription factor NF-kappa-B. This Mus musculus (Mouse) protein is p53-induced death domain-containing protein 1.